The sequence spans 103 residues: Urease subunit beta (103 aa).

The protein belongs to the urease beta subunit family. In terms of assembly, heterotrimer of UreA (gamma), UreB (beta) and UreC (alpha) subunits. Three heterotrimers associate to form the active enzyme.

The protein resides in the cytoplasm. It carries out the reaction urea + 2 H2O + H(+) = hydrogencarbonate + 2 NH4(+). Its pathway is nitrogen metabolism; urea degradation; CO(2) and NH(3) from urea (urease route): step 1/1. This chain is Urease subunit beta, found in Streptomyces avermitilis (strain ATCC 31267 / DSM 46492 / JCM 5070 / NBRC 14893 / NCIMB 12804 / NRRL 8165 / MA-4680).